The primary structure comprises 124 residues: Small ribosomal subunit protein uS12 (124 aa).

Asp-89 carries the post-translational modification 3-methylthioaspartic acid. Positions 103–124 (DTAGVQKRRQGRSKYGAKRPKS) are disordered. Positions 108–124 (QKRRQGRSKYGAKRPKS) are enriched in basic residues.

This sequence belongs to the universal ribosomal protein uS12 family. As to quaternary structure, part of the 30S ribosomal subunit. Contacts proteins S8 and S17. May interact with IF1 in the 30S initiation complex.

Its function is as follows. With S4 and S5 plays an important role in translational accuracy. Functionally, interacts with and stabilizes bases of the 16S rRNA that are involved in tRNA selection in the A site and with the mRNA backbone. Located at the interface of the 30S and 50S subunits, it traverses the body of the 30S subunit contacting proteins on the other side and probably holding the rRNA structure together. The combined cluster of proteins S8, S12 and S17 appears to hold together the shoulder and platform of the 30S subunit. The protein is Small ribosomal subunit protein uS12 of Methylococcus capsulatus (strain ATCC 33009 / NCIMB 11132 / Bath).